The primary structure comprises 251 residues: Geranylgeranylglyceryl phosphate synthase (251 aa).

Positions 25 and 54 each coordinate Mg(2+). Residues 173–179 (YLEAGSG), 204–205 (GG), and 226–227 (GT) each bind sn-glycerol 1-phosphate.

This sequence belongs to the GGGP/HepGP synthase family. Group II subfamily. The cofactor is Mg(2+).

Its subcellular location is the cytoplasm. The enzyme catalyses sn-glycerol 1-phosphate + (2E,6E,10E)-geranylgeranyl diphosphate = sn-3-O-(geranylgeranyl)glycerol 1-phosphate + diphosphate. The protein operates within membrane lipid metabolism; glycerophospholipid metabolism. Prenyltransferase that catalyzes the transfer of the geranylgeranyl moiety of geranylgeranyl diphosphate (GGPP) to the C3 hydroxyl of sn-glycerol-1-phosphate (G1P). This reaction is the first ether-bond-formation step in the biosynthesis of archaeal membrane lipids. This chain is Geranylgeranylglyceryl phosphate synthase, found in Pyrococcus furiosus (strain ATCC 43587 / DSM 3638 / JCM 8422 / Vc1).